Consider the following 359-residue polypeptide: tRNA-specific 2-thiouridylase MnmA (359 aa).

ATP is bound by residues 6 to 13 (AMSGGVDS) and Leu-32. Cys-97 functions as the Nucleophile in the catalytic mechanism. Cysteines 97 and 195 form a disulfide. Gly-121 is an ATP binding site. Residues 144 to 146 (KDQ) are interaction with tRNA. Cys-195 acts as the Cysteine persulfide intermediate in catalysis.

The protein belongs to the MnmA/TRMU family.

The protein resides in the cytoplasm. The catalysed reaction is S-sulfanyl-L-cysteinyl-[protein] + uridine(34) in tRNA + AH2 + ATP = 2-thiouridine(34) in tRNA + L-cysteinyl-[protein] + A + AMP + diphosphate + H(+). In terms of biological role, catalyzes the 2-thiolation of uridine at the wobble position (U34) of tRNA, leading to the formation of s(2)U34. This Tropheryma whipplei (strain Twist) (Whipple's bacillus) protein is tRNA-specific 2-thiouridylase MnmA.